The primary structure comprises 72 residues: Inner membrane protein YmgF (72 aa).

Topologically, residues 1–9 are cytoplasmic; it reads MNNSNNLDY. The helical transmembrane segment at 10–30 threads the bilayer; it reads FTLYIIFSIAFMLITLLVILI. The Periplasmic segment spans residues 31–34; the sequence is AKPS. The helical transmembrane segment at 35-55 threads the bilayer; sequence TGLGEVLVTINLLNALVWLAI. The Cytoplasmic segment spans residues 56-72; the sequence is NLVNRLRERLVNHRDQQ.

Interacts with FtsL, FtsQ, FtsI, FtsN, and probably many other cell division proteins.

It localises to the cell inner membrane. Its function is as follows. Could be involved in cell division. May participate in the stabilization of the cell divisome under specific conditions. This is Inner membrane protein YmgF (ymgF) from Escherichia coli (strain K12).